The primary structure comprises 439 residues: UDP-N-acetylmuramate--L-alanine ligase (439 aa).

ATP is bound at residue 113–119 (GSHGKTS).

It belongs to the MurCDEF family.

It is found in the cytoplasm. It catalyses the reaction UDP-N-acetyl-alpha-D-muramate + L-alanine + ATP = UDP-N-acetyl-alpha-D-muramoyl-L-alanine + ADP + phosphate + H(+). Its pathway is cell wall biogenesis; peptidoglycan biosynthesis. Its function is as follows. Cell wall formation. This Lactobacillus delbrueckii subsp. bulgaricus (strain ATCC 11842 / DSM 20081 / BCRC 10696 / JCM 1002 / NBRC 13953 / NCIMB 11778 / NCTC 12712 / WDCM 00102 / Lb 14) protein is UDP-N-acetylmuramate--L-alanine ligase.